A 122-amino-acid polypeptide reads, in one-letter code: Large ribosomal subunit protein eL34 (122 aa).

The protein belongs to the eukaryotic ribosomal protein eL34 family.

The polypeptide is Large ribosomal subunit protein eL34 (rpl34) (Dictyostelium discoideum (Social amoeba)).